The following is a 46-amino-acid chain: Large ribosomal subunit protein bL36 (46 aa).

The protein belongs to the bacterial ribosomal protein bL36 family.

This Escherichia coli O7:K1 (strain IAI39 / ExPEC) protein is Large ribosomal subunit protein bL36.